The chain runs to 314 residues: tRNA dimethylallyltransferase (314 aa).

Residue Gly-12–Thr-19 participates in ATP binding. Thr-14–Thr-19 contributes to the substrate binding site. Interaction with substrate tRNA stretches follow at residues Asp-37 to Gln-40 and Gln-161 to Arg-165.

It belongs to the IPP transferase family. In terms of assembly, monomer. The cofactor is Mg(2+).

It catalyses the reaction adenosine(37) in tRNA + dimethylallyl diphosphate = N(6)-dimethylallyladenosine(37) in tRNA + diphosphate. Functionally, catalyzes the transfer of a dimethylallyl group onto the adenine at position 37 in tRNAs that read codons beginning with uridine, leading to the formation of N6-(dimethylallyl)adenosine (i(6)A). This chain is tRNA dimethylallyltransferase, found in Nitrosococcus oceani (strain ATCC 19707 / BCRC 17464 / JCM 30415 / NCIMB 11848 / C-107).